The sequence spans 2616 residues: Serine protease ndl (2616 aa).

The N-terminal stretch at 1–43 (MNYNMDEMEATRLLRHPRRWWSIGFGKRIVAISILVIIVLLFS) is a signal peptide. Ser215 and Ser220 each carry phosphoserine. One copy of the WIID 1 repeat lies at 261-269 (ISWIIDGHD). Residue Asn291 is glycosylated (N-linked (GlcNAc...) asparagine). Residues 320–328 (ISWILDHFD) form a WIID 2 repeat. N-linked (GlcNAc...) asparagine glycosylation occurs at Asn347. A disordered region spans residues 352 to 375 (SASSEPIVDTENTNSDHVPTTENG). The N-linked (GlcNAc...) asparagine glycan is linked to Asn379. The WIID 3 repeat unit spans residues 399 to 407 (FDWILDGEE). Asn417 carries an N-linked (GlcNAc...) asparagine glycan. WIID repeat units lie at residues 446 to 454 (FDWIIDGRE) and 477 to 485 (FDWIIDGEE). N-linked (GlcNAc...) asparagine glycosylation is found at Asn492 and Asn515. One copy of the WIID 6 repeat lies at 528-536 (FDWIIDGGE). The span at 537 to 547 (SSGEVSTSSTS) shows a compositional bias: low complexity. The interval 537–574 (SSGEVSTSSTSQPKLTTREAISNPESPRSSHPLDNPTS) is disordered. The span at 548–565 (QPKLTTREAISNPESPRS) shows a compositional bias: polar residues. Ser574 and Ser581 each carry phosphoserine. Residue Asn598 is glycosylated (N-linked (GlcNAc...) asparagine). A glycan (O-linked (Xyl...) (glycosaminoglycan) serine) is linked at Ser794. Residues 798-817 (GQGANIFSKNASPQKPTNGQ) form a disordered region. Residues 804 to 817 (FSKNASPQKPTNGQ) show a composition bias toward polar residues. Asn827 carries N-linked (GlcNAc...) asparagine glycosylation. A glycan (O-linked (Xyl...) (glycosaminoglycan) serine) is linked at Ser829. Residue Asn861 is glycosylated (N-linked (GlcNAc...) asparagine). 2 LDL-receptor class A domains span residues 889–929 (SRCP…ACTC) and 955–1006 (FGCE…QCSM). 3 cysteine pairs are disulfide-bonded: Cys891-Cys905, Cys899-Cys918, and Cys912-Cys927. An LDL-receptor class A 2; truncated domain is found at 929–956 (CADRVDEERLCDGYEDCPMGEDELGCFG). 3 cysteine pairs are disulfide-bonded: Cys957/Cys982, Cys964/Cys995, and Cys989/Cys1004. The N-linked (GlcNAc...) asparagine glycan is linked to Asn975. Positions 1031 to 1033 (RGD) match the Cell attachment site motif. Asn1064 carries N-linked (GlcNAc...) asparagine glycosylation. Ser1134 and Ser1136 each carry phosphoserine. In terms of domain architecture, Peptidase S1 1 spans 1145–1383 (IVGGSYTSAL…YLDWLEMATT (239 aa)). Cys1170 and Cys1186 are joined by a disulfide. Catalysis depends on charge relay system residues His1185 and Asp1233. 6 disulfides stabilise this stretch: Cys1276-Cys1338, Cys1305-Cys1317, Cys1328-Cys1359, Cys1396-Cys1408, Cys1401-Cys1421, and Cys1415-Cys1430. Residue Ser1332 is the Charge relay system of the active site. One can recognise an LDL-receptor class A 4 domain in the interval 1394–1432 (QLCPGFICVWGGKRCIAKRQRCDRNVDCLGGEDEVGCTY). An N-linked (GlcNAc...) asparagine glycan is attached at Asn1445. Disordered stretches follow at residues 1530–1557 (FTVSDSATSPSTLLPTTTNPSTWLPSTN) and 1683–1704 (PTTTTESAKTTTTHSSSTHSEK). Low complexity-rich tracts occupy residues 1537–1557 (TSPSTLLPTTTNPSTWLPSTN) and 1683–1700 (PTTTTESAKTTTTHSSST). The LDL-receptor class A 5; truncated domain maps to 1713 to 1743 (FVCKKMSQIVDIMMRCDRKVDCEDGTDELDC). 6 cysteine pairs are disulfide-bonded: Cys1728/Cys1745, Cys1734/Cys1764, Cys1758/Cys1773, Cys1776/Cys1789, Cys1783/Cys1802, and Cys1796/Cys1811. The 31-residue stretch at 1745 to 1775 (CKDYLKGSLKGLICDGKADCEDLTDEQNCVE) folds into the LDL-receptor class A 6; truncated domain. Residues 1774–1813 (VECQSNEFRCPLSKTCLPLSSRCDNKVDCKFKEDEKDCFA) enclose the LDL-receptor class A 7 domain. N-linked (GlcNAc...) asparagine glycosylation is found at Asn1878, Asn1956, and Asn2023. The region spanning 2027 to 2301 (LVNEQLHEAI…LQDIIDKPSC (275 aa)) is the Peptidase S1 2 domain. Residues Cys2055 and Cys2071 are joined by a disulfide bond. N-linked (GlcNAc...) asparagine glycans are attached at residues Asn2144, Asn2173, Asn2197, Asn2237, and Asn2269. A disulfide bridge connects residues Cys2177 and Cys2230. LDL-receptor class A domains are found at residues 2308 to 2346 (PDCSTHRCPLGTCLPQAAMCNGRSDCHDGSDEEETKCRQ), 2349 to 2389 (QQCA…ICSC), and 2419 to 2459 (CNCT…YCFG). Cystine bridges form between Cys2310–Cys2320, Cys2315–Cys2333, Cys2327–Cys2344, Cys2351–Cys2364, Cys2358–Cys2377, and Cys2371–Cys2387. One can recognise an LDL-receptor class A 10; truncated domain in the interval 2387–2419 (CSCFTYLQATDPSKICDGKRNCWDKSDESSVLC). N-linked (GlcNAc...) asparagine glycosylation is present at Asn2420. 3 disulfide bridges follow: Cys2421–Cys2435, Cys2428–Cys2448, and Cys2442–Cys2457. 2 N-linked (GlcNAc...) asparagine glycosylation sites follow: Asn2556 and Asn2601.

Belongs to the peptidase S1 family. Requires cleavage for activation (presumably). Follicle.

The protein resides in the secreted. The protein localises to the extracellular space. It localises to the extracellular matrix. Its function is as follows. Component of the extracellular signaling pathway that establishes the dorsal-ventral pathway of the embryo. A protease cascade involving ndl, gd, snk and ea results in activation of the spz Toll receptor ligand; acts upstream of gd, snk and ea and is required for proteolytic processing of gd. Activation of ea requires activation of the ndl-gd-snk protease cascade and sulfation of a vitelline membrane component by pip. Localized activation of the Toll receptor in the ventral region of the embryo defines cell identities along the dorsal-ventral continuum. The polypeptide is Serine protease ndl (Drosophila melanogaster (Fruit fly)).